Consider the following 440-residue polypeptide: Serine hydroxymethyltransferase (440 aa).

Residues Leu119 and 123-125 (GHL) contribute to the (6S)-5,6,7,8-tetrahydrofolate site. Residue Lys228 is modified to N6-(pyridoxal phosphate)lysine. Position 370–372 (370–372 (SPF)) interacts with (6S)-5,6,7,8-tetrahydrofolate.

This sequence belongs to the SHMT family. As to quaternary structure, homodimer. Pyridoxal 5'-phosphate serves as cofactor.

The protein resides in the cytoplasm. It carries out the reaction (6R)-5,10-methylene-5,6,7,8-tetrahydrofolate + glycine + H2O = (6S)-5,6,7,8-tetrahydrofolate + L-serine. It participates in one-carbon metabolism; tetrahydrofolate interconversion. Its pathway is amino-acid biosynthesis; glycine biosynthesis; glycine from L-serine: step 1/1. Its function is as follows. Catalyzes the reversible interconversion of serine and glycine with tetrahydrofolate (THF) serving as the one-carbon carrier. This reaction serves as the major source of one-carbon groups required for the biosynthesis of purines, thymidylate, methionine, and other important biomolecules. Also exhibits THF-independent aldolase activity toward beta-hydroxyamino acids, producing glycine and aldehydes, via a retro-aldol mechanism. The polypeptide is Serine hydroxymethyltransferase (Chlorobaculum parvum (strain DSM 263 / NCIMB 8327) (Chlorobium vibrioforme subsp. thiosulfatophilum)).